Here is a 459-residue protein sequence, read N- to C-terminus: Elongation factor 1-alpha (459 aa).

Gly-2 bears the N,N,N-trimethylglycine mark. Lys-3 is subject to N6,N6-dimethyllysine; alternate. The residue at position 3 (Lys-3) is an N6-methyllysine; alternate. Residues 5–240 enclose the tr-type G domain; it reads KLHVNVVVIG…DAIEPPTRPT (236 aa). Residues 14–21 are G1; sequence GHVDSGKS. 14-21 lines the GTP pocket; it reads GHVDSGKS. Position 30 is an N6-methyllysine (Lys-30). Positions 70–74 are G2; that stretch reads GITID. Lys-79 carries the N6,N6,N6-trimethyllysine modification. A G3 region spans residues 91-94; the sequence is DAPG. Residues 91 to 95 and 153 to 156 contribute to the GTP site; these read DAPGH and NKMD. A G4 region spans residues 153–156; sequence NKMD. The interval 192–194 is G5; sequence SGW. Residue Lys-316 is modified to N6,N6-dimethyllysine; alternate. Lys-316 carries the post-translational modification N6-methyllysine; alternate. The residue at position 390 (Lys-390) is an N6-methyllysine.

It belongs to the TRAFAC class translation factor GTPase superfamily. Classic translation factor GTPase family. EF-Tu/EF-1A subfamily.

It is found in the cytoplasm. Functionally, this protein promotes the GTP-dependent binding of aminoacyl-tRNA to the A-site of ribosomes during protein biosynthesis. In Cryptococcus neoformans var. neoformans serotype D (strain B-3501A) (Filobasidiella neoformans), this protein is Elongation factor 1-alpha (TEF1).